The sequence spans 309 residues: Porphobilinogen deaminase (309 aa).

An S-(dipyrrolylmethanemethyl)cysteine modification is found at Cys240.

Belongs to the HMBS family. Monomer. Dipyrromethane serves as cofactor.

It carries out the reaction 4 porphobilinogen + H2O = hydroxymethylbilane + 4 NH4(+). It participates in porphyrin-containing compound metabolism; protoporphyrin-IX biosynthesis; coproporphyrinogen-III from 5-aminolevulinate: step 2/4. In terms of biological role, tetrapolymerization of the monopyrrole PBG into the hydroxymethylbilane pre-uroporphyrinogen in several discrete steps. The polypeptide is Porphobilinogen deaminase (Lawsonia intracellularis (strain PHE/MN1-00)).